The primary structure comprises 638 residues: 1,4-alpha-glucan branching enzyme GlgB (638 aa).

The Nucleophile role is filled by aspartate 303. Glutamate 356 serves as the catalytic Proton donor.

Belongs to the glycosyl hydrolase 13 family. GlgB subfamily. In terms of assembly, monomer.

The catalysed reaction is Transfers a segment of a (1-&gt;4)-alpha-D-glucan chain to a primary hydroxy group in a similar glucan chain.. The protein operates within glycan biosynthesis; glycogen biosynthesis. Catalyzes the formation of the alpha-1,6-glucosidic linkages in glycogen by scission of a 1,4-alpha-linked oligosaccharide from growing alpha-1,4-glucan chains and the subsequent attachment of the oligosaccharide to the alpha-1,6 position. The sequence is that of 1,4-alpha-glucan branching enzyme GlgB from Lactobacillus acidophilus (strain ATCC 700396 / NCK56 / N2 / NCFM).